A 70-amino-acid polypeptide reads, in one-letter code: uncharacterized protein (70 aa).

This is an uncharacterized protein from Escherichia coli (strain K12).